The chain runs to 319 residues: Protein-methionine-sulfoxide reductase catalytic subunit MsrP (319 aa).

Residues 1–40 (MHKLNENDVTPEHIFFERRKIIQSMGLMGAASLLPRFSLA) constitute a signal peptide (tat-type signal). Mo-molybdopterin is bound by residues Asn73, 76–77 (YE), Cys131, Thr166, Asn218, Arg223, and 234–236 (NIK).

This sequence belongs to the MsrP family. In terms of assembly, heterodimer of a catalytic subunit (MsrP) and a heme-binding subunit (MsrQ). Requires Mo-molybdopterin as cofactor. In terms of processing, predicted to be exported by the Tat system. The position of the signal peptide cleavage has not been experimentally proven.

It is found in the periplasm. It carries out the reaction L-methionyl-[protein] + a quinone + H2O = L-methionyl-(S)-S-oxide-[protein] + a quinol. The enzyme catalyses L-methionyl-[protein] + a quinone + H2O = L-methionyl-(R)-S-oxide-[protein] + a quinol. In terms of biological role, part of the MsrPQ system that repairs oxidized periplasmic proteins containing methionine sulfoxide residues (Met-O), using respiratory chain electrons. Thus protects these proteins from oxidative-stress damage caused by reactive species of oxygen and chlorine generated by the host defense mechanisms. MsrPQ is essential for the maintenance of envelope integrity under bleach stress, rescuing a wide series of structurally unrelated periplasmic proteins from methionine oxidation. The catalytic subunit MsrP is non-stereospecific, being able to reduce both (R-) and (S-) diastereoisomers of methionine sulfoxide. The sequence is that of Protein-methionine-sulfoxide reductase catalytic subunit MsrP from Pasteurella multocida (strain Pm70).